Reading from the N-terminus, the 184-residue chain is MVRYSLDPENPTKSCKSRGSNLRVHFKNTRETAQAIKGMHIRKATKYLKDVTLQKQCVPFRRYNGGVGRCAQAKQWGWTQGRWPKKSAEFLLHMLKNAESNAELKGLDVDSLVIEHIQVNKAPKMRRRTYRAHGRINPYMSSPCHIEMILTEKEQIVPKPEEEVAQKKKISQKKLKKQKLMARE.

The tract at residues 160–184 (PEEEVAQKKKISQKKLKKQKLMARE) is disordered. Residues 167-184 (KKKISQKKLKKQKLMARE) show a composition bias toward basic residues.

This sequence belongs to the universal ribosomal protein uL22 family. In terms of assembly, component of the large ribosomal subunit. Expressed in pancreas, lung, colon, cystic duct, gall bladder, kidney and liver. Expressed at high levels in the well differentiated pancreatic tumor cell lines HPAF, COLO 357 and Capan-1, the moderately differentiated pancreatic tumor cell lines T3M-4, AsPc-1 and BxPc-3, the poorly differentiated pancreatic tumor cell line MIA PaCa-2, and the pancreatic tumor cell lines of undefined differentiation status such as SW979. Expressed at lower levels in the poorly differentiated pancreatic tumor cell lines HCG-25 and PANC-1.

The protein localises to the cytoplasm. Its function is as follows. Component of the large ribosomal subunit. The ribosome is a large ribonucleoprotein complex responsible for the synthesis of proteins in the cell. The polypeptide is Large ribosomal subunit protein uL22 (RPL17) (Homo sapiens (Human)).